The primary structure comprises 583 residues: Aspartate--tRNA(Asp/Asn) ligase (583 aa).

An L-aspartate-binding site is contributed by E172. The segment at 196–199 (QMLK) is aspartate. Residue R218 coordinates L-aspartate. ATP-binding positions include 218-220 (RDE) and Q227. H446 provides a ligand contact to L-aspartate. An ATP-binding site is contributed by E480. Residue R487 coordinates L-aspartate. An ATP-binding site is contributed by 532-535 (GLDR).

Belongs to the class-II aminoacyl-tRNA synthetase family. Type 1 subfamily. In terms of assembly, homodimer.

Its subcellular location is the cytoplasm. It carries out the reaction tRNA(Asx) + L-aspartate + ATP = L-aspartyl-tRNA(Asx) + AMP + diphosphate. Functionally, aspartyl-tRNA synthetase with relaxed tRNA specificity since it is able to aspartylate not only its cognate tRNA(Asp) but also tRNA(Asn). Reaction proceeds in two steps: L-aspartate is first activated by ATP to form Asp-AMP and then transferred to the acceptor end of tRNA(Asp/Asn). The polypeptide is Aspartate--tRNA(Asp/Asn) ligase (Streptococcus mutans serotype c (strain ATCC 700610 / UA159)).